The sequence spans 203 residues: Small ribosomal subunit protein uS4c (203 aa).

A disordered region spans residues 15–42 (LGALPGLTSKRPRAGSDPRNQELSGNKS). The S4 RNA-binding domain occupies 89 to 150 (MRLDNILFRL…DQKSKAMIQN (62 aa)).

This sequence belongs to the universal ribosomal protein uS4 family. In terms of assembly, part of the 30S ribosomal subunit. Contacts protein S5. The interaction surface between S4 and S5 is involved in control of translational fidelity.

It localises to the plastid. The protein localises to the chloroplast. One of the primary rRNA binding proteins, it binds directly to 16S rRNA where it nucleates assembly of the body of the 30S subunit. Functionally, with S5 and S12 plays an important role in translational accuracy. The chain is Small ribosomal subunit protein uS4c (rps4) from Oenothera elata subsp. hookeri (Hooker's evening primrose).